The following is a 273-amino-acid chain: Octanoyltransferase (273 aa).

Positions 35–254 (DRVPDTCLLL…HLRDILENAE (220 aa)) constitute a BPL/LPL catalytic domain. Substrate contacts are provided by residues 73–80 (RGGKITWH), 184–186 (AIG), and 197–199 (GFA). Residue cysteine 215 is the Acyl-thioester intermediate of the active site.

This sequence belongs to the LipB family.

It is found in the cytoplasm. It catalyses the reaction octanoyl-[ACP] + L-lysyl-[protein] = N(6)-octanoyl-L-lysyl-[protein] + holo-[ACP] + H(+). It functions in the pathway protein modification; protein lipoylation via endogenous pathway; protein N(6)-(lipoyl)lysine from octanoyl-[acyl-carrier-protein]: step 1/2. Catalyzes the transfer of endogenously produced octanoic acid from octanoyl-acyl-carrier-protein onto the lipoyl domains of lipoate-dependent enzymes. Lipoyl-ACP can also act as a substrate although octanoyl-ACP is likely to be the physiological substrate. The chain is Octanoyltransferase from Streptomyces griseus subsp. griseus (strain JCM 4626 / CBS 651.72 / NBRC 13350 / KCC S-0626 / ISP 5235).